Reading from the N-terminus, the 273-residue chain is Orotidine 5'-phosphate decarboxylase (273 aa).

Catalysis depends on Lys-96, which acts as the Proton donor.

It belongs to the OMP decarboxylase family. Type 2 subfamily.

The catalysed reaction is orotidine 5'-phosphate + H(+) = UMP + CO2. The protein operates within pyrimidine metabolism; UMP biosynthesis via de novo pathway; UMP from orotate: step 2/2. This chain is Orotidine 5'-phosphate decarboxylase, found in Flavobacterium johnsoniae (strain ATCC 17061 / DSM 2064 / JCM 8514 / BCRC 14874 / CCUG 350202 / NBRC 14942 / NCIMB 11054 / UW101) (Cytophaga johnsonae).